The primary structure comprises 290 residues: 4-hydroxy-tetrahydrodipicolinate synthase (290 aa).

Thr-44 provides a ligand contact to pyruvate. The active-site Proton donor/acceptor is Tyr-132. The active-site Schiff-base intermediate with substrate is Lys-160. Ile-202 serves as a coordination point for pyruvate.

This sequence belongs to the DapA family. As to quaternary structure, homotetramer; dimer of dimers.

It is found in the cytoplasm. It catalyses the reaction L-aspartate 4-semialdehyde + pyruvate = (2S,4S)-4-hydroxy-2,3,4,5-tetrahydrodipicolinate + H2O + H(+). The protein operates within amino-acid biosynthesis; L-lysine biosynthesis via DAP pathway; (S)-tetrahydrodipicolinate from L-aspartate: step 3/4. Functionally, catalyzes the condensation of (S)-aspartate-beta-semialdehyde [(S)-ASA] and pyruvate to 4-hydroxy-tetrahydrodipicolinate (HTPA). In Cereibacter sphaeroides (strain ATCC 17025 / ATH 2.4.3) (Rhodobacter sphaeroides), this protein is 4-hydroxy-tetrahydrodipicolinate synthase.